A 167-amino-acid chain; its full sequence is MNVDFIAGINNLGEKIYTCEPFKTSFQNPFIVALIITAVVLVVFFAICNPPVDKKRKTKTAIYLYICIVALLFLHYYVLNHQLNDIYNKSNMDVIVSSIHDKYKGGDEIIPPVSPPSISNELEEDRPKKILAGSKLAGLADSKPAEPAVSKPLVPLQEVIMPSQYNN.

2 consecutive transmembrane segments (helical) span residues 28-48 (NPFIVALIITAVVLVVFFAIC) and 60-80 (TAIYLYICIVALLFLHYYVLN). Asn-88 carries N-linked (GlcNAc...) asparagine; by host glycosylation.

It belongs to the asfivirus B169L family.

It is found in the host membrane. Its subcellular location is the virion. The protein is Transmembrane protein B169L of African swine fever virus (isolate Tick/Malawi/Lil 20-1/1983) (ASFV).